We begin with the raw amino-acid sequence, 164 residues long: MIILGIDPGSRKTGYGIISKQGNRLIHVDNGAIFTQSAKDFPERLEKIFTGLSEIIAQYRPEVVAVEDVFLAKNAQSALKLGQARGAAIVAAVNVGLPVHEYTAMQVKQAVVGTGRAEKAQVQQMIKALLNLPEVAQEDASDALAVAICHAHSAGMSALLKGVR.

Catalysis depends on residues Asp-7, Glu-67, and Asp-139. The Mg(2+) site is built by Asp-7, Glu-67, and Asp-139.

Belongs to the RuvC family. As to quaternary structure, homodimer which binds Holliday junction (HJ) DNA. The HJ becomes 2-fold symmetrical on binding to RuvC with unstacked arms; it has a different conformation from HJ DNA in complex with RuvA. In the full resolvosome a probable DNA-RuvA(4)-RuvB(12)-RuvC(2) complex forms which resolves the HJ. Mg(2+) serves as cofactor.

It is found in the cytoplasm. It catalyses the reaction Endonucleolytic cleavage at a junction such as a reciprocal single-stranded crossover between two homologous DNA duplexes (Holliday junction).. Its function is as follows. The RuvA-RuvB-RuvC complex processes Holliday junction (HJ) DNA during genetic recombination and DNA repair. Endonuclease that resolves HJ intermediates. Cleaves cruciform DNA by making single-stranded nicks across the HJ at symmetrical positions within the homologous arms, yielding a 5'-phosphate and a 3'-hydroxyl group; requires a central core of homology in the junction. The consensus cleavage sequence is 5'-(A/T)TT(C/G)-3'. Cleavage occurs on the 3'-side of the TT dinucleotide at the point of strand exchange. HJ branch migration catalyzed by RuvA-RuvB allows RuvC to scan DNA until it finds its consensus sequence, where it cleaves and resolves the cruciform DNA. The sequence is that of Crossover junction endodeoxyribonuclease RuvC from Geobacter sp. (strain M21).